The sequence spans 470 residues: V-type ATP synthase beta chain (470 aa).

The protein belongs to the ATPase alpha/beta chains family.

Produces ATP from ADP in the presence of a proton gradient across the membrane. The V-type beta chain is a regulatory subunit. The protein is V-type ATP synthase beta chain of Deinococcus geothermalis (strain DSM 11300 / CIP 105573 / AG-3a).